Reading from the N-terminus, the 305-residue chain is Putative S-adenosyl-L-methionine-dependent methyltransferase MAB_4607c (305 aa).

Residues Asp-128 and 155 to 156 (DL) contribute to the S-adenosyl-L-methionine site.

It belongs to the UPF0677 family.

Functionally, exhibits S-adenosyl-L-methionine-dependent methyltransferase activity. The chain is Putative S-adenosyl-L-methionine-dependent methyltransferase MAB_4607c from Mycobacteroides abscessus (strain ATCC 19977 / DSM 44196 / CCUG 20993 / CIP 104536 / JCM 13569 / NCTC 13031 / TMC 1543 / L948) (Mycobacterium abscessus).